The chain runs to 147 residues: 3-dehydroquinate dehydratase (147 aa).

Tyr25 serves as the catalytic Proton acceptor. 3 residues coordinate substrate: Asn76, His82, and Asp89. The active-site Proton donor is His102. Substrate is bound by residues 103–104 and Arg113; that span reads LS.

The protein belongs to the type-II 3-dehydroquinase family. As to quaternary structure, homododecamer.

It catalyses the reaction 3-dehydroquinate = 3-dehydroshikimate + H2O. The protein operates within metabolic intermediate biosynthesis; chorismate biosynthesis; chorismate from D-erythrose 4-phosphate and phosphoenolpyruvate: step 3/7. Functionally, catalyzes a trans-dehydration via an enolate intermediate. This Nostoc sp. (strain PCC 7120 / SAG 25.82 / UTEX 2576) protein is 3-dehydroquinate dehydratase.